We begin with the raw amino-acid sequence, 40 residues long: Photosystem II reaction center protein J (40 aa).

Residues 8–28 (IPLWIIGTVAGIVVIGLIGLF) form a helical membrane-spanning segment.

This sequence belongs to the PsbJ family. As to quaternary structure, PSII is composed of 1 copy each of membrane proteins PsbA, PsbB, PsbC, PsbD, PsbE, PsbF, PsbH, PsbI, PsbJ, PsbK, PsbL, PsbM, PsbT, PsbX, PsbY, PsbZ, Psb30/Ycf12, at least 3 peripheral proteins of the oxygen-evolving complex and a large number of cofactors. It forms dimeric complexes.

Its subcellular location is the plastid. The protein resides in the chloroplast thylakoid membrane. Its function is as follows. One of the components of the core complex of photosystem II (PSII). PSII is a light-driven water:plastoquinone oxidoreductase that uses light energy to abstract electrons from H(2)O, generating O(2) and a proton gradient subsequently used for ATP formation. It consists of a core antenna complex that captures photons, and an electron transfer chain that converts photonic excitation into a charge separation. This is Photosystem II reaction center protein J from Pisum sativum (Garden pea).